Reading from the N-terminus, the 346-residue chain is UDP-3-O-acylglucosamine N-acyltransferase (346 aa).

Histidine 253 functions as the Proton acceptor in the catalytic mechanism.

It belongs to the transferase hexapeptide repeat family. LpxD subfamily. Homotrimer.

It catalyses the reaction a UDP-3-O-[(3R)-3-hydroxyacyl]-alpha-D-glucosamine + a (3R)-hydroxyacyl-[ACP] = a UDP-2-N,3-O-bis[(3R)-3-hydroxyacyl]-alpha-D-glucosamine + holo-[ACP] + H(+). Its pathway is bacterial outer membrane biogenesis; LPS lipid A biosynthesis. Its function is as follows. Catalyzes the N-acylation of UDP-3-O-acylglucosamine using 3-hydroxyacyl-ACP as the acyl donor. Is involved in the biosynthesis of lipid A, a phosphorylated glycolipid that anchors the lipopolysaccharide to the outer membrane of the cell. This is UDP-3-O-acylglucosamine N-acyltransferase from Rickettsia peacockii (strain Rustic).